A 515-amino-acid chain; its full sequence is Thioredoxin domain-containing protein 2 (515 aa).

Residues 1-23 are disordered; sequence MTLNNGGKANERGSNENPLQALS. A phosphoserine mark is found at Ser14 and Ser39. Residues 51 to 390 are disordered; that stretch reads TLHMSTEESE…NTIKSSEEDV (340 aa). 2 stretches are compositionally biased toward polar residues: residues 61-75 and 85-136; these read FPQQ…SENT and KPSS…TNST. Tandem repeats lie at residues 92-106, 107-121, 122-136, 137-151, 152-166, 167-181, 182-196, 197-211, 212-226, 227-241, 242-256, 257-271, 272-286, 287-301, 302-316, 317-331, 332-346, 347-362, 363-375, 376-390, and 391-405. The interval 92–405 is 21 X 15 AA approximate tandem repeat of Q-P-K-X-G-D-I-P-K-S-[PS]-E-[KE]-X-I; it reads QLKQENISKS…KLLGLGAEIE (314 aa). 2 stretches are compositionally biased toward basic and acidic residues: residues 137–293 and 302–358; these read HYRE…ETKV and QSKE…KSPE. The residue at position 146 (Ser146) is a Phosphoserine. A compositionally biased stretch (polar residues) spans 375 to 384; it reads IQSQEGNTIK. Residues 398–515 form the Thioredoxin domain; the sequence is LGLGAEIETL…KLERSISELK (118 aa). Cys442 and Cys445 form a disulfide bridge.

As to expression, testis-specific. Strongly expressed in the testicular seminiferous tubules, mostly in the round spermatids.

Its subcellular location is the cytoplasm. Functionally, probably plays a regulatory role in sperm development. May participate in regulation of fibrous sheath (FS) assembly by supporting the formation of disulfide bonds during sperm tail morphogenesis. May also be required to rectify incorrect disulfide pairing and generate suitable pairs between the FS constituents. Can reduce disulfide bonds in vitro in the presence of NADP and thioredoxin reductase. This chain is Thioredoxin domain-containing protein 2 (Txndc2), found in Mus musculus (Mouse).